A 467-amino-acid chain; its full sequence is Acid phosphatase PHO11 (467 aa).

Residues 1 to 17 (MLKSAVYSILAASLVNA) form the signal peptide. His-75 acts as the Nucleophile in catalysis. N-linked (GlcNAc...) asparagine glycans are attached at residues Asn-97, Asn-162, Asn-192, Asn-250, and Asn-315. Asp-338 (proton donor) is an active-site residue. Residues Asn-356, Asn-390, Asn-439, Asn-445, and Asn-461 are each glycosylated (N-linked (GlcNAc...) asparagine).

This sequence belongs to the histidine acid phosphatase family. Glycosylated during secretion across the membrane.

The enzyme catalyses a phosphate monoester + H2O = an alcohol + phosphate. The chain is Acid phosphatase PHO11 (PHO11) from Saccharomyces cerevisiae (strain ATCC 204508 / S288c) (Baker's yeast).